Reading from the N-terminus, the 403-residue chain is Na(+)/H(+) antiporter NhaA (403 aa).

A run of 11 helical transmembrane segments spans residues 23–43 (AFFL…PWAA), 66–86 (VAAW…ILEI), 101–121 (VALP…TYLL), 132–152 (GWAI…LALG), 161–181 (AWLM…IALF), 184–204 (GSMY…LIGA), 219–239 (GILL…AGVI), 257–277 (WVSS…FGFM), 297–317 (LGIM…ATLL), 333–353 (GMLF…LFVA), and 363–383 (IAPA…TGWF).

Belongs to the NhaA Na(+)/H(+) (TC 2.A.33) antiporter family.

It is found in the cell inner membrane. It carries out the reaction Na(+)(in) + 2 H(+)(out) = Na(+)(out) + 2 H(+)(in). In terms of biological role, na(+)/H(+) antiporter that extrudes sodium in exchange for external protons. The protein is Na(+)/H(+) antiporter NhaA of Gluconobacter oxydans (strain 621H) (Gluconobacter suboxydans).